The following is a 582-amino-acid chain: Phosphoribosylaminoimidazole carboxylase (582 aa).

The ATP-grasp domain occupies 114-305; the sequence is KKYLAEKGVA…QFENHLRAIL (192 aa). Residue 143-200 coordinates ATP; sequence AGRLGLPLMLKAKTLAYDGRGNSPLKSTSSEDIQASLKFLGDRPLYAEGWAPFVKEVA.

The protein in the C-terminal section; belongs to the AIR carboxylase family. Class I subfamily.

The catalysed reaction is 5-amino-1-(5-phospho-D-ribosyl)imidazole-4-carboxylate + H(+) = 5-amino-1-(5-phospho-beta-D-ribosyl)imidazole + CO2. The protein operates within purine metabolism; IMP biosynthesis via de novo pathway; 5-amino-1-(5-phospho-D-ribosyl)imidazole-4-carboxylate from 5-amino-1-(5-phospho-D-ribosyl)imidazole (carboxylase route): step 1/1. This Cryptococcus neoformans var. grubii serotype A (strain H99 / ATCC 208821 / CBS 10515 / FGSC 9487) (Filobasidiella neoformans var. grubii) protein is Phosphoribosylaminoimidazole carboxylase (ADE2).